A 269-amino-acid chain; its full sequence is Regulating synaptic membrane exocytosis protein 4 (269 aa).

In terms of domain architecture, C2 spans 115–233 (PMGGVEIGLQ…DLTTLAVGWY (119 aa)). Ser-254 and Ser-257 each carry phosphoserine.

As to quaternary structure, binds PPFIA3. In terms of tissue distribution, brain specific.

The protein localises to the synapse. Regulates synaptic membrane exocytosis. The protein is Regulating synaptic membrane exocytosis protein 4 (Rims4) of Rattus norvegicus (Rat).